The following is a 232-amino-acid chain: Small ribosomal subunit protein uS3 (232 aa).

Residues 39–107 enclose the KH type-2 domain; sequence VRQFLTKELS…PAQINIAEVR (69 aa).

It belongs to the universal ribosomal protein uS3 family. In terms of assembly, part of the 30S ribosomal subunit. Forms a tight complex with proteins S10 and S14.

Functionally, binds the lower part of the 30S subunit head. Binds mRNA in the 70S ribosome, positioning it for translation. The sequence is that of Small ribosomal subunit protein uS3 from Sodalis glossinidius (strain morsitans).